The following is a 129-amino-acid chain: NADPH-dependent 7-cyano-7-deazaguanine reductase (129 aa).

C34 functions as the Thioimide intermediate in the catalytic mechanism. The Proton donor role is filled by D41. Substrate contacts are provided by residues 56-58 (VEL) and 75-76 (HE).

The protein belongs to the GTP cyclohydrolase I family. QueF type 1 subfamily.

The protein localises to the cytoplasm. It catalyses the reaction 7-aminomethyl-7-carbaguanine + 2 NADP(+) = 7-cyano-7-deazaguanine + 2 NADPH + 3 H(+). It participates in tRNA modification; tRNA-queuosine biosynthesis. In terms of biological role, catalyzes the NADPH-dependent reduction of 7-cyano-7-deazaguanine (preQ0) to 7-aminomethyl-7-deazaguanine (preQ1). This is NADPH-dependent 7-cyano-7-deazaguanine reductase from Nitrosococcus oceani (strain ATCC 19707 / BCRC 17464 / JCM 30415 / NCIMB 11848 / C-107).